The chain runs to 502 residues: Mannitol 2-dehydrogenase (502 aa).

37–48 (IVHIGVGGFHRA) provides a ligand contact to NAD(+).

Belongs to the mannitol dehydrogenase family. Monomer.

It carries out the reaction D-mannitol + NAD(+) = D-fructose + NADH + H(+). Catalyzes the NAD(H)-dependent interconversion of D-fructose and D-mannitol in the mannitol metabolic pathway. This is Mannitol 2-dehydrogenase from Aspergillus fumigatus (strain CBS 144.89 / FGSC A1163 / CEA10) (Neosartorya fumigata).